The primary structure comprises 539 residues: Cytochrome P450 monooxygenase buaD (539 aa).

The first 16 residues, 1–16 (MLVPVLTLLGTLTATG), serve as a signal peptide directing secretion. Asparagine 120 carries an N-linked (GlcNAc...) asparagine glycan. Cysteine 478 is a heme binding site. Asparagine 520 carries N-linked (GlcNAc...) asparagine glycosylation.

Belongs to the cytochrome P450 family. The cofactor is heme.

The protein operates within mycotoxin biosynthesis. Functionally, cytochrome P450 monooxygenase; part of the gene cluster that mediates the biosynthesis of burnettramic acids, an unusual class of bolaamphiphilic pyrrolizidinediones that display potent antibacterial, antifungal, and cytotoxic activities. The first step of the biosynthesis of burnettramic acids is the hydroxylation of proline by the proline hydroxylase buaE to generate 4-hydroxyproline. The PKS-NRPS buaA and trans-enoyl reductase buaC construct the highly reduced polyketide chain, and the condensation (C) domain of buaA then catalyzes the amide bond formation with the activated 4-hydroxyproline. This is followed by the R domain releasing the nascent polyketide-peptide directly via a Dieckmann condensation to afford a tetramic acid fused to the hydroxyproline, generating the bicyclic pyrrolidinedione moiety. The cytochrome P450 monooxygenases buaD and buaG are likely responsible for the multiple hydroxylations on the polyketide chain and its terminus, although in the heterologous context, buaD does not appear to be required. Therefore, while buaG may be a multifunctional cytochrome P450 monooxygenase, it cannot be ruled out that the two secondary alcohols on the polyketide chain could have an acetate origin. Finally, the glycosyltransferase buaB transfers beta-D-mannose to the aglycone burnettramic acid A to form burnettramic acid A. Burnettramic acid B is a minor cis-pyrrolizidine epimer of burnettramic acid A and it is likely that small amounts of it form naturally in acidic environments. The polypeptide is Cytochrome P450 monooxygenase buaD (Petromyces alliaceus (Aspergillus alliaceus)).